The primary structure comprises 361 residues: DNA replication and repair protein RecF (361 aa).

30–37 (GQNAQGKT) is an ATP binding site.

This sequence belongs to the RecF family.

The protein localises to the cytoplasm. Functionally, the RecF protein is involved in DNA metabolism; it is required for DNA replication and normal SOS inducibility. RecF binds preferentially to single-stranded, linear DNA. It also seems to bind ATP. In Streptococcus gordonii (strain Challis / ATCC 35105 / BCRC 15272 / CH1 / DL1 / V288), this protein is DNA replication and repair protein RecF.